The sequence spans 316 residues: Homoserine O-succinyltransferase (316 aa).

Catalysis depends on Cys-142, which acts as the Acyl-thioester intermediate. The substrate site is built by Lys-163 and Ser-192. His-235 functions as the Proton acceptor in the catalytic mechanism. Residue Glu-237 is part of the active site. Arg-249 lines the substrate pocket.

This sequence belongs to the MetA family.

It localises to the cytoplasm. It carries out the reaction L-homoserine + succinyl-CoA = O-succinyl-L-homoserine + CoA. It functions in the pathway amino-acid biosynthesis; L-methionine biosynthesis via de novo pathway; O-succinyl-L-homoserine from L-homoserine: step 1/1. In terms of biological role, transfers a succinyl group from succinyl-CoA to L-homoserine, forming succinyl-L-homoserine. The polypeptide is Homoserine O-succinyltransferase (Shewanella amazonensis (strain ATCC BAA-1098 / SB2B)).